The chain runs to 495 residues: DDB1- and CUL4-associated factor 4 (495 aa).

Residues 1–17 (MNKSRWQSRRRHGRRSH) are compositionally biased toward basic residues. Residues 1–66 (MNKSRWQSRR…TAGTSSVPEL (66 aa)) form a disordered region. Positions 24-34 (RLRDSEDRSDS) are enriched in basic and acidic residues. Residues 51-62 (PSTSSGTAGTSS) are compositionally biased toward low complexity. WD repeat units follow at residues 368–407 (FHDS…CVRQ) and 410–451 (GHVN…LLRT).

Interacts with DDB1 and CUL4A.

Its pathway is protein modification; protein ubiquitination. Its function is as follows. May function as a substrate receptor for CUL4-DDB1 E3 ubiquitin-protein ligase complex. The sequence is that of DDB1- and CUL4-associated factor 4 (DCAF4) from Homo sapiens (Human).